A 451-amino-acid chain; its full sequence is Cyclin-dependent kinase 18 (451 aa).

A phosphoserine mark is found at S12, S51, S66, S75, and S109. The Protein kinase domain occupies 121–402 (YVKLDKLGEG…AEAALNHPYF (282 aa)). ATP contacts are provided by residues 127–135 (LGEGTYATV) and K150. D242 functions as the Proton acceptor in the catalytic mechanism. 2 positions are modified to phosphoserine: S417 and S420.

Belongs to the protein kinase superfamily. CMGC Ser/Thr protein kinase family. CDC2/CDKX subfamily. As to expression, in brain, kidney, intestine and at a much lower level, in fetal tissues.

It carries out the reaction L-seryl-[protein] + ATP = O-phospho-L-seryl-[protein] + ADP + H(+). The enzyme catalyses L-threonyl-[protein] + ATP = O-phospho-L-threonyl-[protein] + ADP + H(+). Its function is as follows. May play a role in signal transduction cascades in terminally differentiated cells. The polypeptide is Cyclin-dependent kinase 18 (Cdk18) (Mus musculus (Mouse)).